We begin with the raw amino-acid sequence, 301 residues long: 4-hydroxybenzoate octaprenyltransferase (301 aa).

The next 8 helical transmembrane spans lie at Ile-34–Leu-54, Leu-57–Ile-77, Leu-108–Leu-128, Leu-152–Val-172, Val-176–Thr-196, Phe-221–Gly-241, Asp-245–Phe-265, and Ala-279–Ala-299.

The protein belongs to the UbiA prenyltransferase family. Requires Mg(2+) as cofactor.

Its subcellular location is the cell inner membrane. The enzyme catalyses all-trans-octaprenyl diphosphate + 4-hydroxybenzoate = 4-hydroxy-3-(all-trans-octaprenyl)benzoate + diphosphate. Its pathway is cofactor biosynthesis; ubiquinone biosynthesis. Functionally, catalyzes the prenylation of para-hydroxybenzoate (PHB) with an all-trans polyprenyl group. Mediates the second step in the final reaction sequence of ubiquinone-8 (UQ-8) biosynthesis, which is the condensation of the polyisoprenoid side chain with PHB, generating the first membrane-bound Q intermediate 3-octaprenyl-4-hydroxybenzoate. This is 4-hydroxybenzoate octaprenyltransferase from Xanthomonas euvesicatoria pv. vesicatoria (strain 85-10) (Xanthomonas campestris pv. vesicatoria).